Here is an 876-residue protein sequence, read N- to C-terminus: Alanine--tRNA ligase (876 aa).

The Zn(2+) site is built by His565, His569, Cys667, and His671.

This sequence belongs to the class-II aminoacyl-tRNA synthetase family. It depends on Zn(2+) as a cofactor.

It localises to the cytoplasm. The enzyme catalyses tRNA(Ala) + L-alanine + ATP = L-alanyl-tRNA(Ala) + AMP + diphosphate. Functionally, catalyzes the attachment of alanine to tRNA(Ala) in a two-step reaction: alanine is first activated by ATP to form Ala-AMP and then transferred to the acceptor end of tRNA(Ala). Also edits incorrectly charged Ser-tRNA(Ala) and Gly-tRNA(Ala) via its editing domain. The chain is Alanine--tRNA ligase from Staphylococcus aureus (strain MRSA252).